Here is a 396-residue protein sequence, read N- to C-terminus: MSWSFLTRLLEEIHNHSTFVGKIWLTVLIAFRIALTAVGGESIYYDEQSKFVCNTEQPGCENVCYDAFAPLSHVRFWVFQIILVATPSVMYLGYAIHKIAKMEHGEADKKAARSKPYAMRWKQHRALEETEEDHEEDPMMYPEMELESEKENKEQNQPKPKHDGRRRIREDGLMKIYVLQLLARTVFEVGFLIGQYFLYGFQVHPFYVCSRLPCPHKIDCFISRPTEKTIFLLIMYGVTGLCLLLNIWEMLHLGFGTIRDSLNSKRRELEDPGAYNYPFTWNTPSAPPGYNIAVKPDQIQYTELSNAKIAYKQNKANIAQEQQYGSHEENLPADLETLQREIKMVQERLDLAIQAYSHQNNPHGPREKKAKVGSKAGSNKSSASSKSGDGKNSVWI.

The Cytoplasmic portion of the chain corresponds to 1–22; the sequence is MSWSFLTRLLEEIHNHSTFVGK. A helical membrane pass occupies residues 23-45; the sequence is IWLTVLIAFRIALTAVGGESIYY. Over 46–75 the chain is Extracellular; it reads DEQSKFVCNTEQPGCENVCYDAFAPLSHVR. Residues 76-95 traverse the membrane as a helical segment; sequence FWVFQIILVATPSVMYLGYA. At 96–175 the chain is on the cytoplasmic side; it reads IHKIAKMEHG…RRIREDGLMK (80 aa). The disordered stretch occupies residues 145–165; sequence ELESEKENKEQNQPKPKHDGR. Positions 147 to 156 are enriched in basic and acidic residues; the sequence is ESEKENKEQN. Residues 176-198 traverse the membrane as a helical segment; that stretch reads IYVLQLLARTVFEVGFLIGQYFL. At 199–228 the chain is on the extracellular side; sequence YGFQVHPFYVCSRLPCPHKIDCFISRPTEK. A helical membrane pass occupies residues 229-248; that stretch reads TIFLLIMYGVTGLCLLLNIW. The Cytoplasmic portion of the chain corresponds to 249–396; it reads EMLHLGFGTI…SGDGKNSVWI (148 aa). Residues 355–396 are disordered; sequence AYSHQNNPHGPREKKAKVGSKAGSNKSSASSKSGDGKNSVWI. The span at 373–396 shows a compositional bias: low complexity; it reads GSKAGSNKSSASSKSGDGKNSVWI.

Belongs to the connexin family. Gamma-type subfamily. As to quaternary structure, a connexon is composed of a hexamer of connexins. Interacts with CNST.

It localises to the cell membrane. It is found in the cell junction. The protein localises to the gap junction. One gap junction consists of a cluster of closely packed pairs of transmembrane channels, the connexons, through which materials of low MW diffuse from one cell to a neighboring cell. This chain is Gap junction gamma-1 protein (GJC1), found in Canis lupus familiaris (Dog).